The sequence spans 358 residues: 4-hydroxy-3-methylbut-2-en-1-yl diphosphate synthase (flavodoxin) (358 aa).

Residues cysteine 270, cysteine 273, cysteine 305, and glutamate 312 each contribute to the [4Fe-4S] cluster site.

The protein belongs to the IspG family. Requires [4Fe-4S] cluster as cofactor.

It catalyses the reaction (2E)-4-hydroxy-3-methylbut-2-enyl diphosphate + oxidized [flavodoxin] + H2O + 2 H(+) = 2-C-methyl-D-erythritol 2,4-cyclic diphosphate + reduced [flavodoxin]. It participates in isoprenoid biosynthesis; isopentenyl diphosphate biosynthesis via DXP pathway; isopentenyl diphosphate from 1-deoxy-D-xylulose 5-phosphate: step 5/6. Its function is as follows. Converts 2C-methyl-D-erythritol 2,4-cyclodiphosphate (ME-2,4cPP) into 1-hydroxy-2-methyl-2-(E)-butenyl 4-diphosphate. The protein is 4-hydroxy-3-methylbut-2-en-1-yl diphosphate synthase (flavodoxin) of Ruthia magnifica subsp. Calyptogena magnifica.